A 397-amino-acid polypeptide reads, in one-letter code: CCA-adding enzyme (397 aa).

Gly27 and Arg30 together coordinate ATP. 2 residues coordinate CTP: Gly27 and Arg30. Residues Asp40 and Asp42 each coordinate Mg(2+). The ATP site is built by Arg111, Asp154, Arg157, Arg160, and Arg163. Residues Arg111, Asp154, Arg157, Arg160, and Arg163 each contribute to the CTP site.

Belongs to the tRNA nucleotidyltransferase/poly(A) polymerase family. Bacterial CCA-adding enzyme type 3 subfamily. As to quaternary structure, homodimer. It depends on Mg(2+) as a cofactor.

It carries out the reaction a tRNA precursor + 2 CTP + ATP = a tRNA with a 3' CCA end + 3 diphosphate. It catalyses the reaction a tRNA with a 3' CCA end + 2 CTP + ATP = a tRNA with a 3' CCACCA end + 3 diphosphate. In terms of biological role, catalyzes the addition and repair of the essential 3'-terminal CCA sequence in tRNAs without using a nucleic acid template. Adds these three nucleotides in the order of C, C, and A to the tRNA nucleotide-73, using CTP and ATP as substrates and producing inorganic pyrophosphate. Has no poly(A) polymerase activity. The polypeptide is CCA-adding enzyme (Bacillus subtilis (strain 168)).